We begin with the raw amino-acid sequence, 350 residues long: Transmembrane protein 185A (350 aa).

Transmembrane regions (helical) follow at residues 16–36 (LIYA…DGII), 41–61 (WAVF…ASVG), 81–101 (FKAM…EVLV), 111–131 (FWLL…AACV), 177–197 (ILMS…VLFL), 211–231 (ITMA…EILL), and 240–260 (AFSC…LMAT). Residues 298 to 350 (DLHHEDNEETEETPVPEPPKIAPMFRKKARVVITQSPGKYVLPPPKLNIEMPD) form a mediates interaction with MAP1B region.

It belongs to the TMEM185 family. In terms of assembly, interacts with MAP1B.

The protein localises to the cell projection. The protein resides in the dendrite. It localises to the membrane. This Homo sapiens (Human) protein is Transmembrane protein 185A (TMEM185A).